Here is a 269-residue protein sequence, read N- to C-terminus: MRVALKLAYIGTEFHGSQIQPSVETVEKELFKALRNLRIIESPKSANYICAGRTDAGVHALGQVIAFDTDRPNLAIPRIINSGLPPTIWVWAHAEVPYDFDARRHAVSRHYRYVISGEGYDISKMREASKLLLGTHDFENFSRSNGEKSTVRTLERINVRVDGDITKIDVVGNSFLWNMVRKIVTALSMIGKGVRDNDWLIQMLNPDIYEEGIEPAPAYGLTLMGVNYGEEINWIEDNYSIRRASDQNSKRILRYRVMAEVLEELIYHE.

Aspartate 55 functions as the Nucleophile in the catalytic mechanism. A substrate-binding site is contributed by tyrosine 111.

The protein belongs to the tRNA pseudouridine synthase TruA family.

It catalyses the reaction uridine(38/39/40) in tRNA = pseudouridine(38/39/40) in tRNA. In terms of biological role, formation of pseudouridine at positions 38, 39 and 40 in the anticodon stem and loop of transfer RNAs. This chain is tRNA pseudouridine synthase A, found in Methanosarcina mazei (strain ATCC BAA-159 / DSM 3647 / Goe1 / Go1 / JCM 11833 / OCM 88) (Methanosarcina frisia).